The primary structure comprises 294 residues: Ribosomal RNA small subunit methyltransferase A (294 aa).

S-adenosyl-L-methionine-binding residues include N33, L35, G60, E81, D106, and N131.

The protein belongs to the class I-like SAM-binding methyltransferase superfamily. rRNA adenine N(6)-methyltransferase family. RsmA subfamily.

Its subcellular location is the cytoplasm. The enzyme catalyses adenosine(1518)/adenosine(1519) in 16S rRNA + 4 S-adenosyl-L-methionine = N(6)-dimethyladenosine(1518)/N(6)-dimethyladenosine(1519) in 16S rRNA + 4 S-adenosyl-L-homocysteine + 4 H(+). Its function is as follows. Specifically dimethylates two adjacent adenosines (A1518 and A1519) in the loop of a conserved hairpin near the 3'-end of 16S rRNA in the 30S particle. May play a critical role in biogenesis of 30S subunits. This Lactococcus lactis subsp. lactis (strain IL1403) (Streptococcus lactis) protein is Ribosomal RNA small subunit methyltransferase A.